The primary structure comprises 256 residues: MVALRLIPCLDVAHGRVVKGVNFVNLRDSGDPVELACRYSDEGADELVFLDIRASVENRNTLVDLVSRTAKSVKIPFTVGGGIDSVSSINDLLRAGADKVSLNSSAVRNPDLISKSSREFGNQCIVIAIDARRKVNKFGEWEVYVKGGRENTGIDVLSWAKKVEELGAGEILLTSMDGDGTQNGYDLNLTESVANIVDIPVIASGGAGSLEDIFDVFKEGRASAALLASLLHDKKLTLKEIKTFLLEKKLSIRPYE.

Residues aspartate 11 and aspartate 130 contribute to the active site.

It belongs to the HisA/HisF family. In terms of assembly, heterodimer of HisH and HisF.

The protein localises to the cytoplasm. The catalysed reaction is 5-[(5-phospho-1-deoxy-D-ribulos-1-ylimino)methylamino]-1-(5-phospho-beta-D-ribosyl)imidazole-4-carboxamide + L-glutamine = D-erythro-1-(imidazol-4-yl)glycerol 3-phosphate + 5-amino-1-(5-phospho-beta-D-ribosyl)imidazole-4-carboxamide + L-glutamate + H(+). Its pathway is amino-acid biosynthesis; L-histidine biosynthesis; L-histidine from 5-phospho-alpha-D-ribose 1-diphosphate: step 5/9. In terms of biological role, IGPS catalyzes the conversion of PRFAR and glutamine to IGP, AICAR and glutamate. The HisF subunit catalyzes the cyclization activity that produces IGP and AICAR from PRFAR using the ammonia provided by the HisH subunit. The sequence is that of Imidazole glycerol phosphate synthase subunit HisF from Prochlorococcus marinus (strain AS9601).